The chain runs to 957 residues: Glycine dehydrogenase (decarboxylating) (957 aa).

Lys708 is modified (N6-(pyridoxal phosphate)lysine).

The protein belongs to the GcvP family. In terms of assembly, the glycine cleavage system is composed of four proteins: P, T, L and H. It depends on pyridoxal 5'-phosphate as a cofactor.

The catalysed reaction is N(6)-[(R)-lipoyl]-L-lysyl-[glycine-cleavage complex H protein] + glycine + H(+) = N(6)-[(R)-S(8)-aminomethyldihydrolipoyl]-L-lysyl-[glycine-cleavage complex H protein] + CO2. In terms of biological role, the glycine cleavage system catalyzes the degradation of glycine. The P protein binds the alpha-amino group of glycine through its pyridoxal phosphate cofactor; CO(2) is released and the remaining methylamine moiety is then transferred to the lipoamide cofactor of the H protein. This is Glycine dehydrogenase (decarboxylating) from Escherichia coli O81 (strain ED1a).